The following is a 351-amino-acid chain: Histidinol-phosphate aminotransferase (351 aa).

At K215 the chain carries N6-(pyridoxal phosphate)lysine.

Belongs to the class-II pyridoxal-phosphate-dependent aminotransferase family. Histidinol-phosphate aminotransferase subfamily. The cofactor is pyridoxal 5'-phosphate.

The catalysed reaction is L-histidinol phosphate + 2-oxoglutarate = 3-(imidazol-4-yl)-2-oxopropyl phosphate + L-glutamate. It participates in amino-acid biosynthesis; L-histidine biosynthesis; L-histidine from 5-phospho-alpha-D-ribose 1-diphosphate: step 7/9. This is Histidinol-phosphate aminotransferase from Methanocorpusculum labreanum (strain ATCC 43576 / DSM 4855 / Z).